The primary structure comprises 187 residues: UPF0301 protein KPK_0728 (187 aa).

The protein belongs to the UPF0301 (AlgH) family.

This is UPF0301 protein KPK_0728 from Klebsiella pneumoniae (strain 342).